Reading from the N-terminus, the 1383-residue chain is Putative autophagy-related protein 11 (1383 aa).

2 coiled-coil regions span residues 16–49 and 117–324; these read DKNN…YELN and NLFL…QNKE. Composition is skewed to basic and acidic residues over residues 1151 to 1224 and 1233 to 1249; these read EEEK…EDRK and HSSD…KTKE. The tract at residues 1151–1249 is disordered; the sequence is EEEKKKNEEE…KYNKKEKTKE (99 aa).

The protein belongs to the ATG11 family.

Functionally, involved in cytoplasm to vacuole transport (Cvt), pexophagy, mitophagy and nucleophagy. Works as scaffold proteins that recruit ATG proteins to the pre-autophagosome (PAS), the site of vesicle/autophagosome formation. The sequence is that of Putative autophagy-related protein 11 from Plasmodium falciparum (isolate 3D7).